The primary structure comprises 124 residues: Small ribosomal subunit protein uS12 (124 aa).

The tract at residues Met-1–Ala-22 is disordered. Asp-89 bears the 3-methylthioaspartic acid mark.

The protein belongs to the universal ribosomal protein uS12 family. As to quaternary structure, part of the 30S ribosomal subunit. Contacts proteins S8 and S17. May interact with IF1 in the 30S initiation complex.

In terms of biological role, with S4 and S5 plays an important role in translational accuracy. Interacts with and stabilizes bases of the 16S rRNA that are involved in tRNA selection in the A site and with the mRNA backbone. Located at the interface of the 30S and 50S subunits, it traverses the body of the 30S subunit contacting proteins on the other side and probably holding the rRNA structure together. The combined cluster of proteins S8, S12 and S17 appears to hold together the shoulder and platform of the 30S subunit. In Pseudoalteromonas atlantica (strain T6c / ATCC BAA-1087), this protein is Small ribosomal subunit protein uS12.